Reading from the N-terminus, the 129-residue chain is UPF0212 protein MM_2357 (129 aa).

The protein belongs to the UPF0212 family.

This chain is UPF0212 protein MM_2357, found in Methanosarcina mazei (strain ATCC BAA-159 / DSM 3647 / Goe1 / Go1 / JCM 11833 / OCM 88) (Methanosarcina frisia).